A 129-amino-acid chain; its full sequence is Modulator protein MzrA (129 aa).

Residues 1–14 (MINFRGRFGRPLWH) are Cytoplasmic-facing. The chain crosses the membrane as a helical span at residues 15-35 (YLVLPVVLLLLAVILLTPMIV). Over 36–129 (QTESTLKIRP…VFRSNQQNLG (94 aa)) the chain is Periplasmic.

This sequence belongs to the MzrA family. Interacts with EnvZ.

Its subcellular location is the cell inner membrane. Its function is as follows. Modulates the activity of the EnvZ/OmpR two-component regulatory system, probably by directly modulating EnvZ enzymatic activity and increasing stability of phosphorylated OmpR. This Yersinia pestis (strain Pestoides F) protein is Modulator protein MzrA.